The sequence spans 63 residues: uncharacterized protein (63 aa).

Residues 15–37 (ISHCHLPLSPATAIAIIICFRIV) form a helical membrane-spanning segment.

The protein localises to the membrane. This is an uncharacterized protein from Saccharomyces cerevisiae (strain ATCC 204508 / S288c) (Baker's yeast).